The chain runs to 342 residues: MNQAAQTVATISAEALRQTARNTHALPEDARWRVDDVAALFALPFNDLLFRAQQVHRENFDANTVQLSTLLSIKTGGCEEDCGYCPQSAHHDAGVKAEKLMELDEVLEAARAAKANGATRFCMGAAWRSPKDRHLEPVMDMVREVKAMGLETCVTLGMLKAEQAQQLKDAGLDYYNHNLDTSPEFYGKIITTRTYQDRLDTIGHVRDAGINVCCGGIVGMGESREARAGLIAQLANMDPYPESVPINNLVQVEGTPLAGTEALDPFEFVRTIAVARITMPGAMVRLSAGREAMDEALQALCFMAGANSIFYGEKLLTTGNPQADRDRALLARLDIRAEGYAG.

Residues 63-290 (NTVQLSTLLS…GAMVRLSAGR (228 aa)) enclose the Radical SAM core domain. [4Fe-4S] cluster contacts are provided by cysteine 78, cysteine 82, and cysteine 85. [2Fe-2S] cluster is bound by residues cysteine 122, cysteine 153, cysteine 213, and arginine 285.

It belongs to the radical SAM superfamily. Biotin synthase family. As to quaternary structure, homodimer. [4Fe-4S] cluster is required as a cofactor. [2Fe-2S] cluster serves as cofactor.

It catalyses the reaction (4R,5S)-dethiobiotin + (sulfur carrier)-SH + 2 reduced [2Fe-2S]-[ferredoxin] + 2 S-adenosyl-L-methionine = (sulfur carrier)-H + biotin + 2 5'-deoxyadenosine + 2 L-methionine + 2 oxidized [2Fe-2S]-[ferredoxin]. Its pathway is cofactor biosynthesis; biotin biosynthesis; biotin from 7,8-diaminononanoate: step 2/2. Functionally, catalyzes the conversion of dethiobiotin (DTB) to biotin by the insertion of a sulfur atom into dethiobiotin via a radical-based mechanism. This chain is Biotin synthase, found in Cupriavidus pinatubonensis (strain JMP 134 / LMG 1197) (Cupriavidus necator (strain JMP 134)).